The chain runs to 149 residues: 3-dehydroquinate dehydratase (149 aa).

Tyr26 (proton acceptor) is an active-site residue. The substrate site is built by Asn78, His84, and Asp91. Catalysis depends on His104, which acts as the Proton donor. Substrate is bound by residues 105-106 (IS) and Arg115.

This sequence belongs to the type-II 3-dehydroquinase family. Homododecamer.

It catalyses the reaction 3-dehydroquinate = 3-dehydroshikimate + H2O. It functions in the pathway metabolic intermediate biosynthesis; chorismate biosynthesis; chorismate from D-erythrose 4-phosphate and phosphoenolpyruvate: step 3/7. Functionally, catalyzes a trans-dehydration via an enolate intermediate. The protein is 3-dehydroquinate dehydratase (aroQ) of Buchnera aphidicola subsp. Schizaphis graminum (strain Sg).